The primary structure comprises 552 residues: Polypyrimidine tract-binding protein 3 (552 aa).

Position 1 is an N-acetylmethionine (Met-1). Ser-17 carries the phosphoserine modification. Residues 32–43 show a composition bias toward polar residues; sequence MNSSTPSTANGN. Residues 32 to 55 are disordered; that stretch reads MNSSTPSTANGNDSKKFKRDRPPC. RRM domains lie at 59–143, 182–258, and 358–432; these read RVLH…NLPN, LRII…FSKL, and SVLL…LSKH. Residue Lys-65 forms a Glycyl lysine isopeptide (Lys-Gly) (interchain with G-Cter in SUMO2) linkage. Position 127 is a phosphotyrosine (Tyr-127). Thr-138 bears the Phosphothreonine mark. Residue Lys-216 forms a Glycyl lysine isopeptide (Lys-Gly) (interchain with G-Cter in SUMO2) linkage. Lys-423 bears the N6-acetyllysine mark. A disordered region spans residues 435–455; the sequence is VQLPREGQEDQGLTKDFSNSP. The residue at position 454 (Ser-454) is a Phosphoserine. The 76-residue stretch at 475-550 folds into the RRM 4 domain; the sequence is ATLHLSNIPP…HHLRVSFSKS (76 aa).

Interacts with THBS4 (via the acidic amphipathic C-terminus). Expressed in several hematopoietic cell lines examined.

RNA-binding protein that mediates pre-mRNA alternative splicing regulation. Plays a role in the regulation of cell proliferation, differentiation and migration. Positive regulator of EPO-dependent erythropoiesis. Participates in cell differentiation regulation by repressing tissue-specific exons. Promotes FAS exon 6 skipping. Binds RNA, preferentially to both poly(G) and poly(U). The sequence is that of Polypyrimidine tract-binding protein 3 (PTBP3) from Homo sapiens (Human).